Reading from the N-terminus, the 231-residue chain is Ion-translocating oxidoreductase complex subunit E (231 aa).

6 helical membrane-spanning segments follow: residues 18–38, 39–59, 63–83, 86–106, 125–145, and 182–202; these read ALVQLLGLCPLLAVTSTATNA, LGLGLATTLVLTLTNLTISTL, TPAEIRIPIYVMIIASVVSAV, LINAYAFGLYQSLGIFIPLIV, ALSALDGFSIGMGATCAMFVL, and PFLLAMLPPGAFIGLGLMLAG.

It belongs to the NqrDE/RnfAE family. In terms of assembly, the complex is composed of six subunits: RsxA, RsxB, RsxC, RsxD, RsxE and RsxG.

The protein resides in the cell inner membrane. In terms of biological role, part of a membrane-bound complex that couples electron transfer with translocation of ions across the membrane. Required to maintain the reduced state of SoxR. This is Ion-translocating oxidoreductase complex subunit E from Escherichia coli (strain ATCC 8739 / DSM 1576 / NBRC 3972 / NCIMB 8545 / WDCM 00012 / Crooks).